The following is a 231-amino-acid chain: 7-cyano-7-deazaguanine synthase (231 aa).

7–17 (LSSGLDSVAAL) lines the ATP pocket. Positions 195, 203, 206, and 209 each coordinate Zn(2+).

It belongs to the QueC family. Zn(2+) serves as cofactor.

It catalyses the reaction 7-carboxy-7-deazaguanine + NH4(+) + ATP = 7-cyano-7-deazaguanine + ADP + phosphate + H2O + H(+). It participates in purine metabolism; 7-cyano-7-deazaguanine biosynthesis. Catalyzes the ATP-dependent conversion of 7-carboxy-7-deazaguanine (CDG) to 7-cyano-7-deazaguanine (preQ(0)). In Methanosarcina barkeri (strain Fusaro / DSM 804), this protein is 7-cyano-7-deazaguanine synthase.